A 78-amino-acid polypeptide reads, in one-letter code: CDC42 small effector protein 1 (78 aa).

2 S-palmitoyl cysteine lipidation sites follow: C10 and C11. A CRIB domain is found at 30-43; that stretch reads IGEPMNFVHLTHIG.

This sequence belongs to the CDC42SE/SPEC family.

Its subcellular location is the cytoplasm. It localises to the cytoskeleton. The protein localises to the cell membrane. Probably involved in the organization of the actin cytoskeleton by acting downstream of CDC42, inducing actin filament assembly. The polypeptide is CDC42 small effector protein 1 (CDC42SE1) (Gallus gallus (Chicken)).